A 142-amino-acid chain; its full sequence is MFDFNGTLPLMMFQFFLLVAVLNAVFFKPLTQAIDERDGFIRTNNTEARERLAKAKSLTEQYEQELAGTRKQSQQVLADAQAEAQKIAQTQITEAQKQVQAEVMKAQAELESQKQSAFSELEKQVDTLSQQILNKLLGSTLA.

A helical membrane pass occupies residues 7–27 (TLPLMMFQFFLLVAVLNAVFF).

The protein belongs to the ATPase B chain family. In terms of assembly, F-type ATPases have 2 components, F(1) - the catalytic core - and F(0) - the membrane proton channel. F(1) has five subunits: alpha(3), beta(3), gamma(1), delta(1), epsilon(1). F(0) has four main subunits: a(1), b(1), b'(1) and c(10-14). The alpha and beta chains form an alternating ring which encloses part of the gamma chain. F(1) is attached to F(0) by a central stalk formed by the gamma and epsilon chains, while a peripheral stalk is formed by the delta, b and b' chains.

Its subcellular location is the cellular thylakoid membrane. Functionally, f(1)F(0) ATP synthase produces ATP from ADP in the presence of a proton or sodium gradient. F-type ATPases consist of two structural domains, F(1) containing the extramembraneous catalytic core and F(0) containing the membrane proton channel, linked together by a central stalk and a peripheral stalk. During catalysis, ATP synthesis in the catalytic domain of F(1) is coupled via a rotary mechanism of the central stalk subunits to proton translocation. Component of the F(0) channel, it forms part of the peripheral stalk, linking F(1) to F(0). The b'-subunit is a diverged and duplicated form of b found in plants and photosynthetic bacteria. This is ATP synthase subunit b' from Acaryochloris marina (strain MBIC 11017).